We begin with the raw amino-acid sequence, 469 residues long: 3-isopropylmalate dehydratase large subunit (469 aa).

Residues C347, C410, and C413 each contribute to the [4Fe-4S] cluster site.

This sequence belongs to the aconitase/IPM isomerase family. LeuC type 1 subfamily. As to quaternary structure, heterodimer of LeuC and LeuD. The cofactor is [4Fe-4S] cluster.

The enzyme catalyses (2R,3S)-3-isopropylmalate = (2S)-2-isopropylmalate. It participates in amino-acid biosynthesis; L-leucine biosynthesis; L-leucine from 3-methyl-2-oxobutanoate: step 2/4. In terms of biological role, catalyzes the isomerization between 2-isopropylmalate and 3-isopropylmalate, via the formation of 2-isopropylmaleate. The polypeptide is 3-isopropylmalate dehydratase large subunit (Burkholderia mallei (strain NCTC 10247)).